The primary structure comprises 367 residues: Cyclin-Y-like protein 1 (367 aa).

Residues Ser-73, Ser-111, and Ser-118 each carry the phosphoserine modification. Residues 186–291 (EYFKHDPEHK…FLELLQFNIN (106 aa)) form the Cyclin N-terminal domain. Position 352 is a phosphoserine (Ser-352).

It belongs to the cyclin family. Cyclin Y subfamily. In terms of assembly, interacts with CDK16; this interaction mutually increases the stability of CDK16 and CCNYL1 and increases the kinase activity of CDK16. Highly expressed in the testis. Largely restricted to germ cells in the testis.

The protein resides in the cell membrane. Key regulator of Wnt signaling implicated in various biological processes including male fertility, embryonic neurogenesis and cortex development. Activates the cyclin-dependent kinase CDK16, and promotes sperm maturation. In Mus musculus (Mouse), this protein is Cyclin-Y-like protein 1.